Consider the following 179-residue polypeptide: Large ribosomal subunit protein uL5 (179 aa).

Belongs to the universal ribosomal protein uL5 family. In terms of assembly, part of the 50S ribosomal subunit; part of the 5S rRNA/L5/L18/L25 subcomplex. Contacts the 5S rRNA and the P site tRNA. Forms a bridge to the 30S subunit in the 70S ribosome.

Its function is as follows. This is one of the proteins that bind and probably mediate the attachment of the 5S RNA into the large ribosomal subunit, where it forms part of the central protuberance. In the 70S ribosome it contacts protein S13 of the 30S subunit (bridge B1b), connecting the 2 subunits; this bridge is implicated in subunit movement. Contacts the P site tRNA; the 5S rRNA and some of its associated proteins might help stabilize positioning of ribosome-bound tRNAs. This chain is Large ribosomal subunit protein uL5, found in Glaesserella parasuis serovar 5 (strain SH0165) (Haemophilus parasuis).